Reading from the N-terminus, the 676-residue chain is Cysteine-rich receptor-like protein kinase 4 (676 aa).

The first 16 residues, 1–16, serve as a signal peptide directing secretion; that stretch reads MSFFWLFPFLLHLSFA. At 17–287 the chain is on the extracellular side; sequence DSLSPLSAPV…ISERGKGRNS (271 aa). 2 Gnk2-homologous domains span residues 31–135 and 146–246; these read HLNH…HRNI and ILLN…NYSF. N-linked (GlcNAc...) asparagine glycosylation is found at Asn-33, Asn-46, Asn-64, Asn-152, Asn-181, Asn-243, and Asn-248. Positions 252–279 are disordered; it reads TRSSSPPSLPPRSTPQQQLKLAPPPLIS. An N-linked (GlcNAc...) asparagine glycan is attached at Asn-286. The helical transmembrane segment at 288–308 threads the bilayer; it reads SVIIVVVVPIIALLLLFVAFF. Residues 309 to 676 are Cytoplasmic-facing; that stretch reads SLRAKKTRTN…DASITNVTPR (368 aa). Residues 351 to 631 form the Protein kinase domain; the sequence is FCETNKLGQG…QMLTTSSIAL (281 aa). ATP contacts are provided by residues 357-365 and Lys-379; that span reads LGQGGFGEV. Residue Tyr-424 is modified to Phosphotyrosine. Asp-476 acts as the Proton acceptor in catalysis. A Phosphothreonine modification is found at Thr-516. A Phosphotyrosine modification is found at Tyr-524.

Belongs to the protein kinase superfamily. Ser/Thr protein kinase family. CRK subfamily.

The protein localises to the membrane. The enzyme catalyses L-seryl-[protein] + ATP = O-phospho-L-seryl-[protein] + ADP + H(+). It carries out the reaction L-threonyl-[protein] + ATP = O-phospho-L-threonyl-[protein] + ADP + H(+). This is Cysteine-rich receptor-like protein kinase 4 (CRK4) from Arabidopsis thaliana (Mouse-ear cress).